Here is a 374-residue protein sequence, read N- to C-terminus: GDSL esterase/lipase 1 (374 aa).

Positions 1 to 25 (MENSQLVSITFLAYTIIISIGSINC) are cleaved as a signal peptide. Asn-34 carries N-linked (GlcNAc...) asparagine glycosylation. Ser-44 (nucleophile) is an active-site residue. N-linked (GlcNAc...) asparagine glycosylation is found at Asn-184, Asn-203, and Asn-330. Residues Asp-338 and His-341 each act as charge relay system in the active site. The N-linked (GlcNAc...) asparagine glycan is linked to Asn-360.

It belongs to the 'GDSL' lipolytic enzyme family.

The protein resides in the secreted. In terms of biological role, confers resistance to the necrotrophic fungus Alternaria brassicicola. Possesses lipase and antimicrobial activities that directly disrupt fungal spore integrity. Triggers systemic resistance, mostly by the ethylene-dependent pathway. The polypeptide is GDSL esterase/lipase 1 (Arabidopsis thaliana (Mouse-ear cress)).